Consider the following 100-residue polypeptide: MGSRFLLALFLVLLVLGYEVQGSQQIQQDEAGSLALLNKLPESLSSYWDIAKAAVGDLYEKTYLTSVDEKLRDMYSKSSAAVSTYAGIFTDQILTLLKGE.

The signal sequence occupies residues 1–22 (MGSRFLLALFLVLLVLGYEVQG). A lipid binding region spans residues 66–74 (SVDEKLRDM). Positions 78 to 100 (SSAAVSTYAGIFTDQILTLLKGE) are lipoprotein lipase cofactor.

It belongs to the apolipoprotein C2 family. Post-translationally, proapolipoprotein C-II is synthesized as a sialic acid containing glycoprotein which is subsequently desialylated prior to its proteolytic processing. In terms of processing, proapolipoprotein C-II, the major form found in plasma undergoes proteolytic cleavage of its N-terminal hexapeptide to generate the mature form apolipoprotein C-II, which occurs as the minor form in plasma.

It localises to the secreted. Component of chylomicrons, very low-density lipoproteins (VLDL), low-density lipoproteins (LDL), and high-density lipoproteins (HDL) in plasma. Plays an important role in lipoprotein metabolism as an activator of lipoprotein lipase. The polypeptide is Apolipoprotein C-II (Apoc2) (Neotoma lepida (Desert woodrat)).